The primary structure comprises 282 residues: ATP synthase gamma chain (282 aa).

Belongs to the ATPase gamma chain family. In terms of assembly, F-type ATPases have 2 components, CF(1) - the catalytic core - and CF(0) - the membrane proton channel. CF(1) has five subunits: alpha(3), beta(3), gamma(1), delta(1), epsilon(1). CF(0) has three main subunits: a, b and c.

The protein localises to the cell membrane. Its function is as follows. Produces ATP from ADP in the presence of a proton gradient across the membrane. The gamma chain is believed to be important in regulating ATPase activity and the flow of protons through the CF(0) complex. This is ATP synthase gamma chain from Clostridium botulinum (strain ATCC 19397 / Type A).